Here is a 359-residue protein sequence, read N- to C-terminus: DNA replication and repair protein RecF (359 aa).

30 to 37 (GQNAQGKT) provides a ligand contact to ATP.

This sequence belongs to the RecF family.

Its subcellular location is the cytoplasm. The RecF protein is involved in DNA metabolism; it is required for DNA replication and normal SOS inducibility. RecF binds preferentially to single-stranded, linear DNA. It also seems to bind ATP. The sequence is that of DNA replication and repair protein RecF from Lactococcus lactis subsp. cremoris (strain MG1363).